Reading from the N-terminus, the 237-residue chain is 4'-phosphopantetheinyl transferase gsp (237 aa).

Residues Asp106, Glu108, and Glu150 each coordinate Mg(2+).

Belongs to the P-Pant transferase superfamily. Gsp/Sfp/HetI/AcpT family. Mg(2+) serves as cofactor.

The enzyme catalyses apo-[peptidyl-carrier protein] + CoA = holo-[peptidyl-carrier protein] + adenosine 3',5'-bisphosphate + H(+). In terms of biological role, activates the five peptidyl carrier protein (PCP) domains of gramicidin synthase GrsAB, by transferring the 4'-phosphopantetheinyl moiety of coenzyme A (CoA) to a serine residue. Required for gramicidin S production. The polypeptide is 4'-phosphopantetheinyl transferase gsp (gsp) (Aneurinibacillus migulanus (Bacillus migulanus)).